We begin with the raw amino-acid sequence, 73 residues long: Large ribosomal subunit protein bL31 (73 aa).

Belongs to the bacterial ribosomal protein bL31 family. Type A subfamily. In terms of assembly, part of the 50S ribosomal subunit.

Binds the 23S rRNA. In Jannaschia sp. (strain CCS1), this protein is Large ribosomal subunit protein bL31 (rpmE).